A 306-amino-acid chain; its full sequence is Plant-type L-asparaginase (306 aa).

Catalysis depends on Thr-176, which acts as the Nucleophile. Residues 203-206 and 225-228 contribute to the substrate site; these read RVGD and TGLG.

This sequence belongs to the Ntn-hydrolase family. Heterotetramer of two alpha and two beta chains arranged as a dimer of alpha/beta heterodimers. In terms of processing, autocleaved. Generates the alpha and beta subunits. The N-terminal residue of the beta subunit is thought to be responsible for the nucleophile hydrolase activity.

It carries out the reaction L-asparagine + H2O = L-aspartate + NH4(+). Its function is as follows. Catalyzes the hydrolysis of L-asparagine into L-aspartate and ammonia. This chain is Plant-type L-asparaginase, found in Pyrococcus furiosus (strain ATCC 43587 / DSM 3638 / JCM 8422 / Vc1).